Here is a 548-residue protein sequence, read N- to C-terminus: Glucose-6-phosphate isomerase (548 aa).

Glutamate 355 functions as the Proton donor in the catalytic mechanism. Residues histidine 386 and lysine 514 contribute to the active site.

This sequence belongs to the GPI family.

It localises to the cytoplasm. It carries out the reaction alpha-D-glucose 6-phosphate = beta-D-fructose 6-phosphate. The protein operates within carbohydrate biosynthesis; gluconeogenesis. It participates in carbohydrate degradation; glycolysis; D-glyceraldehyde 3-phosphate and glycerone phosphate from D-glucose: step 2/4. In terms of biological role, catalyzes the reversible isomerization of glucose-6-phosphate to fructose-6-phosphate. The polypeptide is Glucose-6-phosphate isomerase (Yersinia enterocolitica serotype O:8 / biotype 1B (strain NCTC 13174 / 8081)).